The following is a 492-amino-acid chain: N-succinylglutamate 5-semialdehyde dehydrogenase (492 aa).

Position 220-225 (220-225) interacts with NAD(+); the sequence is GSANTG. Active-site residues include Glu243 and Cys277.

This sequence belongs to the aldehyde dehydrogenase family. AstD subfamily.

It catalyses the reaction N-succinyl-L-glutamate 5-semialdehyde + NAD(+) + H2O = N-succinyl-L-glutamate + NADH + 2 H(+). It participates in amino-acid degradation; L-arginine degradation via AST pathway; L-glutamate and succinate from L-arginine: step 4/5. Functionally, catalyzes the NAD-dependent reduction of succinylglutamate semialdehyde into succinylglutamate. This is N-succinylglutamate 5-semialdehyde dehydrogenase from Escherichia coli O9:H4 (strain HS).